A 221-amino-acid polypeptide reads, in one-letter code: MNNNYPLFWINEILTNGFVEYILDIFSIMAFLTGIYVILTKNPIVSVLFLILLFGGISSYLNIIGLNFIGLSYIIVYIGAVSILFLFILMLINIRTSELQSNTSNSIPLTIFIGIIFSNFLFPMLPYDIVMLSNFYNNYFSEDFYTIDVNINDNNLNNLYNNVLYFMTSVIWDGSVIDFNHITAIGNIMYTIYNIWLIIASFILLLAMVGSIVITIKQRKI.

Helical transmembrane passes span 18–38 (FVEY…IYVI), 44–64 (IVSV…LNII), 74–94 (IIVY…LINI), 107–127 (IPLT…MLPY), and 195–215 (IWLI…IVIT).

This sequence belongs to the complex I subunit 6 family.

The protein resides in the mitochondrion membrane. It carries out the reaction a ubiquinone + NADH + 5 H(+)(in) = a ubiquinol + NAD(+) + 4 H(+)(out). Core subunit of the mitochondrial membrane respiratory chain NADH dehydrogenase (Complex I) that is believed to belong to the minimal assembly required for catalysis. Complex I functions in the transfer of electrons from NADH to the respiratory chain. The immediate electron acceptor for the enzyme is believed to be ubiquinone. The sequence is that of NADH-ubiquinone oxidoreductase chain 6 (ND6) from Podospora anserina (strain S / ATCC MYA-4624 / DSM 980 / FGSC 10383) (Pleurage anserina).